A 174-amino-acid polypeptide reads, in one-letter code: NADH-quinone oxidoreductase subunit B 2 (174 aa).

Residues Cys53, Cys54, Cys118, and Cys148 each contribute to the [4Fe-4S] cluster site.

Belongs to the complex I 20 kDa subunit family. NDH-1 is composed of 14 different subunits. Subunits NuoB, C, D, E, F, and G constitute the peripheral sector of the complex. [4Fe-4S] cluster is required as a cofactor.

The protein resides in the cell inner membrane. The catalysed reaction is a quinone + NADH + 5 H(+)(in) = a quinol + NAD(+) + 4 H(+)(out). Its function is as follows. NDH-1 shuttles electrons from NADH, via FMN and iron-sulfur (Fe-S) centers, to quinones in the respiratory chain. Couples the redox reaction to proton translocation (for every two electrons transferred, four hydrogen ions are translocated across the cytoplasmic membrane), and thus conserves the redox energy in a proton gradient. The sequence is that of NADH-quinone oxidoreductase subunit B 2 from Cereibacter sphaeroides (strain ATCC 17025 / ATH 2.4.3) (Rhodobacter sphaeroides).